We begin with the raw amino-acid sequence, 260 residues long: F-actin-capping protein subunit beta (260 aa).

The protein belongs to the F-actin-capping protein beta subunit family. As to quaternary structure, component of the F-actin capping complex, composed of a heterodimer of an alpha and a beta subunit.

Its subcellular location is the cytoplasm. The protein resides in the cytoskeleton. The protein localises to the actin patch. F-actin-capping proteins bind in a Ca(2+)-independent manner to the fast growing ends of actin filaments (barbed end) thereby blocking the exchange of subunits at these ends. Unlike other capping proteins (such as gelsolin and severin), these proteins do not sever actin filaments. The sequence is that of F-actin-capping protein subunit beta (CAP2) from Yarrowia lipolytica (strain CLIB 122 / E 150) (Yeast).